Reading from the N-terminus, the 216-residue chain is Ribosomal RNA small subunit methyltransferase G (216 aa).

Residues glycine 73, leucine 78, 124 to 125 (AE), and arginine 139 contribute to the S-adenosyl-L-methionine site.

This sequence belongs to the methyltransferase superfamily. RNA methyltransferase RsmG family.

The protein localises to the cytoplasm. In terms of biological role, specifically methylates the N7 position of guanine in position 518 of 16S rRNA. This Pseudarthrobacter chlorophenolicus (strain ATCC 700700 / DSM 12829 / CIP 107037 / JCM 12360 / KCTC 9906 / NCIMB 13794 / A6) (Arthrobacter chlorophenolicus) protein is Ribosomal RNA small subunit methyltransferase G.